The sequence spans 69 residues: Parvalbumin beta 3 (69 aa).

Ala-1 carries the N-acetylalanine modification. Residues 24–59 (FNYKTFFKFFAIIDQDHSGFIEEEELKLFLQTFSAG) form the EF-hand domain. Asp-37, Asp-39, Ser-41, Phe-43, Glu-45, and Glu-48 together coordinate Ca(2+).

The protein belongs to the parvalbumin family.

In muscle, parvalbumin is thought to be involved in relaxation after contraction. It binds two calcium ions. The chain is Parvalbumin beta 3 from Merluccius polli (Benguela hake).